A 348-amino-acid chain; its full sequence is 3-isopropylmalate dehydrogenase (348 aa).

An NAD(+)-binding site is contributed by 76–87 (GPKWTDPNNRPE). Positions 94, 104, 132, and 217 each coordinate substrate. Residues D217, D241, and D245 each contribute to the Mg(2+) site. Position 275 to 287 (275 to 287 (GSAPDIAGKNVAN)) interacts with NAD(+).

The protein belongs to the isocitrate and isopropylmalate dehydrogenases family. LeuB type 1 subfamily. Homodimer. The cofactor is Mg(2+). Mn(2+) serves as cofactor.

It localises to the cytoplasm. The enzyme catalyses (2R,3S)-3-isopropylmalate + NAD(+) = 4-methyl-2-oxopentanoate + CO2 + NADH. It participates in amino-acid biosynthesis; L-leucine biosynthesis; L-leucine from 3-methyl-2-oxobutanoate: step 3/4. Its function is as follows. Catalyzes the oxidation of 3-carboxy-2-hydroxy-4-methylpentanoate (3-isopropylmalate) to 3-carboxy-4-methyl-2-oxopentanoate. The product decarboxylates to 4-methyl-2 oxopentanoate. This is 3-isopropylmalate dehydrogenase from Staphylococcus aureus (strain MRSA252).